The chain runs to 632 residues: Putative ankyrin repeat protein L767 (632 aa).

ANK repeat units lie at residues 61-97 (YGNTFMTNRIIKNTKYSLLDVNTVQMLLDYGDPDYEF), 228-250 (FDNEKLFYTVLYDSFELTKYIVE), 251-282 (KGFYYDFDSVINSDINLEMLKFFIELGNNLTD), 345-374 (NLDILMKTSILRENINMIKKCIEYGINVDD), and 517-546 (NSIELLFVVVLSENIDLFKLLLEINCNDTD).

The chain is Putative ankyrin repeat protein L767 from Acanthamoeba polyphaga mimivirus (APMV).